The sequence spans 771 residues: Topoisomerase 1-associated factor 2 (771 aa).

Disordered stretches follow at residues 48–69 (NSIN…SIQS), 271–330 (EGVV…ISFD), and 346–367 (SDMH…KSSL). Residues 51-69 (NNCSDPSPTSPSSQNSIQS) are compositionally biased toward low complexity. Residues 275–294 (TQGSDNNKENIPSSTQQQKN) show a composition bias toward polar residues. Basic and acidic residues predominate over residues 295–307 (DGAKRAESKDLDL). Polar residues predominate over residues 346–359 (SDMHIQYSNPSSGA). Ser-397 carries the phosphoserine modification. Thr-405 is subject to Phosphothreonine. The tract at residues 633-771 (NSKDKVEATS…KYVESDEDDQ (139 aa)) is disordered. The span at 640–652 (ATSNSTAQEQEQV) shows a compositional bias: polar residues. The segment covering 690 to 709 (SHSSPSSSSSMSLESSLDSS) has biased composition (low complexity).

The protein to yeast YJL076w. As to quaternary structure, interacts with HPR1.

It is found in the nucleus. The protein is Topoisomerase 1-associated factor 2 (TOF2) of Saccharomyces cerevisiae (strain ATCC 204508 / S288c) (Baker's yeast).